The chain runs to 101 residues: Putative pterin-4-alpha-carbinolamine dehydratase (101 aa).

It belongs to the pterin-4-alpha-carbinolamine dehydratase family.

The catalysed reaction is (4aS,6R)-4a-hydroxy-L-erythro-5,6,7,8-tetrahydrobiopterin = (6R)-L-erythro-6,7-dihydrobiopterin + H2O. This Rhizobium rhizogenes (strain K84 / ATCC BAA-868) (Agrobacterium radiobacter) protein is Putative pterin-4-alpha-carbinolamine dehydratase.